Here is a 624-residue protein sequence, read N- to C-terminus: DNA mismatch repair protein MutL (624 aa).

The tract at residues 355–377 is disordered; sequence EESAPERKLPEKTPEPSYSPMKL. Residues 358 to 368 are compositionally biased toward basic and acidic residues; sequence APERKLPEKTP.

It belongs to the DNA mismatch repair MutL/HexB family.

Its function is as follows. This protein is involved in the repair of mismatches in DNA. It is required for dam-dependent methyl-directed DNA mismatch repair. May act as a 'molecular matchmaker', a protein that promotes the formation of a stable complex between two or more DNA-binding proteins in an ATP-dependent manner without itself being part of a final effector complex. In Bacillus velezensis (strain DSM 23117 / BGSC 10A6 / LMG 26770 / FZB42) (Bacillus amyloliquefaciens subsp. plantarum), this protein is DNA mismatch repair protein MutL.